A 239-amino-acid polypeptide reads, in one-letter code: Uridylate kinase (239 aa).

13–16 (KVSG) contributes to the ATP binding site. Gly-55 contributes to the UMP binding site. Residues Gly-56 and Arg-60 each contribute to the ATP site. UMP-binding positions include Asp-75 and 136 to 143 (TGNPFCTT). Thr-163, Gln-164, Tyr-169, and Asp-172 together coordinate ATP.

The protein belongs to the UMP kinase family. Homohexamer.

Its subcellular location is the cytoplasm. The catalysed reaction is UMP + ATP = UDP + ADP. It participates in pyrimidine metabolism; CTP biosynthesis via de novo pathway; UDP from UMP (UMPK route): step 1/1. Its activity is regulated as follows. Inhibited by UTP. Its function is as follows. Catalyzes the reversible phosphorylation of UMP to UDP. The polypeptide is Uridylate kinase (Rickettsia bellii (strain RML369-C)).